Consider the following 40-residue polypeptide: Snaclec LmrLEC-1 (40 aa).

Cys2 and Cys13 are oxidised to a cystine.

This sequence belongs to the snaclec family. Dimer (non-covalently linked) of heterodimers of subunits alpha and beta (disulfide-linked). In terms of tissue distribution, expressed by the venom gland.

It is found in the secreted. In terms of biological role, interferes with one step of hemostasis (modulation of platelet aggregation, or coagulation cascade, for example). This chain is Snaclec LmrLEC-1, found in Lachesis muta rhombeata (Bushmaster).